The chain runs to 397 residues: Oxygen-dependent coproporphyrinogen-III oxidase, chloroplastic (397 aa).

The segment at 76 to 95 is disordered; the sequence is ESDMGSNVTSNSSSVRGRFE. Over residues 79-90 the composition is skewed to polar residues; sequence MGSNVTSNSSSV. Residues 135–144 are important for dimerization; it reads VLQDGAVFEK. Ser-185 contributes to the substrate binding site. His-199 serves as the catalytic Proton donor. Substrate-binding positions include 201–203 and 355–360; these read NYR and GGRIES. Residues 337–372 form an important for dimerization region; sequence YVEFNLVYDRGTTFGLKTGGRIESILVSLPLTARWE.

It belongs to the aerobic coproporphyrinogen-III oxidase family. Homodimer.

Its subcellular location is the plastid. The protein resides in the chloroplast. The catalysed reaction is coproporphyrinogen III + O2 + 2 H(+) = protoporphyrinogen IX + 2 CO2 + 2 H2O. Its pathway is porphyrin-containing compound metabolism; protoporphyrin-IX biosynthesis; protoporphyrinogen-IX from coproporphyrinogen-III (O2 route): step 1/1. Functionally, involved in the heme and chlorophyll biosynthesis. Catalyzes the aerobic oxidative decarboxylation of propionate groups of rings A and B of coproporphyrinogen-III to yield the vinyl groups in protoporphyrinogen-IX. This is Oxygen-dependent coproporphyrinogen-III oxidase, chloroplastic (CPX) from Nicotiana tabacum (Common tobacco).